Consider the following 161-residue polypeptide: Beta-lactoglobulin-1 (161 aa).

Intrachain disulfides connect Cys-66–Cys-159 and Cys-106–Cys-119.

The protein belongs to the calycin superfamily. Lipocalin family. As to quaternary structure, monomer. In terms of tissue distribution, synthesized in mammary gland and secreted in milk.

It is found in the secreted. In terms of biological role, primary component of whey, it binds retinol and is probably involved in the transport of that molecule. This Canis lupus familiaris (Dog) protein is Beta-lactoglobulin-1 (LGB1).